The following is a 376-amino-acid chain: N-acetyldiaminopimelate deacetylase (376 aa).

Residue D69 is part of the active site. The active-site Proton acceptor is E128.

Belongs to the peptidase M20A family. N-acetyldiaminopimelate deacetylase subfamily.

The enzyme catalyses N-acetyl-(2S,6S)-2,6-diaminopimelate + H2O = (2S,6S)-2,6-diaminopimelate + acetate. Its pathway is amino-acid biosynthesis; L-lysine biosynthesis via DAP pathway; LL-2,6-diaminopimelate from (S)-tetrahydrodipicolinate (acetylase route): step 3/3. Functionally, catalyzes the conversion of N-acetyl-diaminopimelate to diaminopimelate and acetate. In Bacillus cereus (strain B4264), this protein is N-acetyldiaminopimelate deacetylase.